Reading from the N-terminus, the 77-residue chain is Cell division topological specificity factor (77 aa).

Belongs to the MinE family.

Functionally, prevents the cell division inhibition by proteins MinC and MinD at internal division sites while permitting inhibition at polar sites. This ensures cell division at the proper site by restricting the formation of a division septum at the midpoint of the long axis of the cell. In Helicobacter acinonychis (strain Sheeba), this protein is Cell division topological specificity factor.